Here is a 333-residue protein sequence, read N- to C-terminus: MAASAHGSVWGPLRLGIPGLCCRRPPLGLYARMRRLPGPEVSGRSVAAASGPGAWGTDHYCLELLRKRDYEGYLCSLLLPAESRSSVFALRAFNVELAQVKDSVSEKTIGLMRMQFWKKTVEDIYCDNPPHQPVAIELWKAVKRHNLTKRWLMKIVDEREKNLDDKAYRNIKELENYAENTQSSLLYLTLEILGIKDLHADHAASHIGKAQGIVTCLRATPYHGSRRKVFLPMDICMLHGVSQEDFLRRNQDKNVRDVIYDIASQAHLHLKHARSFHKTVPVKAFPAFLQTVSLEDFLKKIQRVDFDIFHPSLQQKNTLLPLYLYIQSWRKTY.

The transit peptide at 1–44 (MAASAHGSVWGPLRLGIPGLCCRRPPLGLYARMRRLPGPEVSGR) directs the protein to the mitochondrion.

The protein belongs to the NDUFAF6 family. Widely expressed. A lower expression is observed in lung and kidney compared to heart, muscle and liver. In the kidney, expression is high in the basal zone of the proximal tubular cells.

It localises to the mitochondrion inner membrane. It is found in the cytoplasm. The protein localises to the nucleus. In terms of biological role, involved in the assembly of mitochondrial NADH:ubiquinone oxidoreductase complex (complex I) at early stages. May play a role in the biogenesis of complex I subunit MT-ND1. This Homo sapiens (Human) protein is NADH dehydrogenase (ubiquinone) complex I, assembly factor 6 (NDUFAF6).